A 210-amino-acid polypeptide reads, in one-letter code: Somatotropin (210 aa).

A signal peptide spans 1-23 (MARALVLLSVVLVSLLVNQGTAS). H38 lines the Zn(2+) pocket. An intrachain disulfide couples C71 to C183. Position 192 (E192) interacts with Zn(2+). The cysteines at positions 200 and 208 are disulfide-linked.

It belongs to the somatotropin/prolactin family.

The protein resides in the secreted. Growth hormone plays an important role in growth control. The polypeptide is Somatotropin (gh) (Ctenopharyngodon idella (Grass carp)).